Reading from the N-terminus, the 154-residue chain is 3-hydroxyacyl-[acyl-carrier-protein] dehydratase FabZ (154 aa).

Residue H59 is part of the active site.

It belongs to the thioester dehydratase family. FabZ subfamily.

It is found in the cytoplasm. The enzyme catalyses a (3R)-hydroxyacyl-[ACP] = a (2E)-enoyl-[ACP] + H2O. Functionally, involved in unsaturated fatty acids biosynthesis. Catalyzes the dehydration of short chain beta-hydroxyacyl-ACPs and long chain saturated and unsaturated beta-hydroxyacyl-ACPs. The protein is 3-hydroxyacyl-[acyl-carrier-protein] dehydratase FabZ of Bartonella bacilliformis (strain ATCC 35685 / KC583 / Herrer 020/F12,63).